We begin with the raw amino-acid sequence, 156 residues long: ATP synthase subunit b (156 aa).

The chain crosses the membrane as a helical span at residues 3-23; the sequence is ITFTIFAQSLAFAALIWIVAT.

The protein belongs to the ATPase B chain family. In terms of assembly, F-type ATPases have 2 components, F(1) - the catalytic core - and F(0) - the membrane proton channel. F(1) has five subunits: alpha(3), beta(3), gamma(1), delta(1), epsilon(1). F(0) has three main subunits: a(1), b(2) and c(10-14). The alpha and beta chains form an alternating ring which encloses part of the gamma chain. F(1) is attached to F(0) by a central stalk formed by the gamma and epsilon chains, while a peripheral stalk is formed by the delta and b chains.

The protein localises to the cell inner membrane. Its function is as follows. F(1)F(0) ATP synthase produces ATP from ADP in the presence of a proton or sodium gradient. F-type ATPases consist of two structural domains, F(1) containing the extramembraneous catalytic core and F(0) containing the membrane proton channel, linked together by a central stalk and a peripheral stalk. During catalysis, ATP synthesis in the catalytic domain of F(1) is coupled via a rotary mechanism of the central stalk subunits to proton translocation. Component of the F(0) channel, it forms part of the peripheral stalk, linking F(1) to F(0). This Xylella fastidiosa (strain 9a5c) protein is ATP synthase subunit b.